A 59-amino-acid chain; its full sequence is Large ribosomal subunit protein uL30 (59 aa).

This sequence belongs to the universal ribosomal protein uL30 family. In terms of assembly, part of the 50S ribosomal subunit.

This chain is Large ribosomal subunit protein uL30, found in Geobacter sulfurreducens (strain ATCC 51573 / DSM 12127 / PCA).